The following is a 179-amino-acid chain: Large ribosomal subunit protein uL6c (179 aa).

This sequence belongs to the universal ribosomal protein uL6 family. Part of the 50S ribosomal subunit.

It is found in the plastid. The protein resides in the cyanelle. In terms of biological role, binds 23S rRNA. The polypeptide is Large ribosomal subunit protein uL6c (rpl6) (Cyanophora paradoxa).